A 42-amino-acid polypeptide reads, in one-letter code: Photosystem II reaction center protein J (42 aa).

A helical transmembrane segment spans residues 10–30 (IPLWLVGTVVGLLAIGLLALF).

This sequence belongs to the PsbJ family. PSII is composed of 1 copy each of membrane proteins PsbA, PsbB, PsbC, PsbD, PsbE, PsbF, PsbH, PsbI, PsbJ, PsbK, PsbL, PsbM, PsbT, PsbX, PsbY, PsbZ, Psb30/Ycf12, at least 3 peripheral proteins of the oxygen-evolving complex and a large number of cofactors. It forms dimeric complexes.

It is found in the plastid. The protein resides in the chloroplast thylakoid membrane. One of the components of the core complex of photosystem II (PSII). PSII is a light-driven water:plastoquinone oxidoreductase that uses light energy to abstract electrons from H(2)O, generating O(2) and a proton gradient subsequently used for ATP formation. It consists of a core antenna complex that captures photons, and an electron transfer chain that converts photonic excitation into a charge separation. The chain is Photosystem II reaction center protein J from Mesostigma viride (Green alga).